Here is a 76-residue protein sequence, read N- to C-terminus: DNA-directed RNA polymerase subunit epsilon (76 aa).

It belongs to the RNA polymerase subunit epsilon family. In terms of assembly, RNAP is composed of a core of 2 alpha, a beta and a beta' subunit. The core is associated with a delta subunit, and at least one of epsilon or omega. When a sigma factor is associated with the core the holoenzyme is formed, which can initiate transcription.

It carries out the reaction RNA(n) + a ribonucleoside 5'-triphosphate = RNA(n+1) + diphosphate. In terms of biological role, a non-essential component of RNA polymerase (RNAP). The protein is DNA-directed RNA polymerase subunit epsilon of Streptococcus sanguinis (strain SK36).